Consider the following 208-residue polypeptide: Fibroblast growth factor 6 (208 aa).

The signal sequence occupies residues 1 to 37 (MALGQRLFITMSRGAGRVQGTLQALVFLGVLVGMVVP). N-linked (GlcNAc...) asparagine glycosylation occurs at asparagine 45. Cysteine 90 and cysteine 157 are disulfide-bonded.

It belongs to the heparin-binding growth factors family. Interacts with FGFR1, FGFR2 and FGFR4. Affinity between fibroblast growth factors (FGFs) and their receptors is increased by heparan sulfate glycosaminoglycans that function as coreceptors. In terms of tissue distribution, embryos, adult muscles and adult testis.

The protein resides in the secreted. The protein localises to the extracellular space. Its function is as follows. Plays an important role in the regulation of cell proliferation, cell differentiation, angiogenesis and myogenesis, and is required for normal muscle regeneration. The polypeptide is Fibroblast growth factor 6 (Fgf6) (Mus musculus (Mouse)).